Consider the following 233-residue polypeptide: DnaA regulatory inactivator Hda (233 aa).

The protein belongs to the DnaA family. HdA subfamily. The active form seems to be an ADP-bound monomer. Forms the RIDA complex (regulatory inactivation of DnaA) of ATP-DnaA, ADP-Hda and the DNA-loaded beta sliding clamp (dnaN).

In terms of biological role, mediates the interaction of DNA replication initiator protein DnaA with DNA polymerase subunit beta sliding clamp (dnaN). Stimulates hydrolysis of ATP-DnaA to ADP-DnaA, rendering DnaA inactive for reinitiation, a process called regulatory inhibition of DnaA or RIDA. This is DnaA regulatory inactivator Hda from Shigella boydii serotype 4 (strain Sb227).